The sequence spans 1995 residues: uncharacterized protein (1995 aa).

7 helical membrane passes run 31–51 (NYTEFGAVFTYFIFSIGEFFK), 53–73 (FFSFSFLNNIWSIPIIIPDIA), 106–126 (LVIFEKFVIGIINSLFLILPT), 157–177 (FLWLASIILGWRFFVIPWLSL), 212–232 (IFLLNFLLALTEQSCIYPFIS), 254–274 (FLLIHGAYLLGILFGSFSLLQ), and 307–327 (ILNFTFLYATMLCAIASIPYY). 2 disordered regions span residues 1418–1441 (SLKKSQIKKRSRHSWKKRSRHQFS) and 1848–1883 (DLRWRPSSRTKQKRKDNTRSSAASKTKSNKRVKTNP). Composition is skewed to basic residues over residues 1422–1441 (SQIKKRSRHSWKKRSRHQFS) and 1853–1863 (PSSRTKQKRKD).

Belongs to the ycf78 family.

Its subcellular location is the plastid. It localises to the chloroplast membrane. Functionally, essential for cell growth. May be involved in binding chloroplast DNA to either the chloroplast envelope or the thylakoid membrane. This is an uncharacterized protein from Chlamydomonas reinhardtii (Chlamydomonas smithii).